Reading from the N-terminus, the 70-residue chain is MKLTCVLIIAVLFLTACQLTTGEQKDHALRSTDKNSKLTRQCTPVGGYCSRHHHCCSNHCIKSIGRCVAH.

An N-terminal signal peptide occupies residues Met1–Gly22. A propeptide spanning residues Glu23–Arg40 is cleaved from the precursor. At Gln41 the chain carries Pyrrolidone carboxylic acid. 3 cysteine pairs are disulfide-bonded: Cys42/Cys56, Cys49/Cys60, and Cys55/Cys67.

It belongs to the conotoxin O1 superfamily. As to expression, expressed by the venom duct.

It localises to the secreted. The protein is Conotoxin ArMKLT2-0111 of Conus arenatus (Sand-dusted cone).